Here is a 396-residue protein sequence, read N- to C-terminus: Jacalin-related lectin 45 (396 aa).

3 consecutive Jacalin-type lectin domains span residues 3–138, 144–264, and 270–392; these read KKVT…KTSH, QFRM…NFAV, and VKKL…YVKP.

It belongs to the jacalin lectin family.

This chain is Jacalin-related lectin 45 (JAL45), found in Arabidopsis thaliana (Mouse-ear cress).